The following is a 44-amino-acid chain: U4-ctenitoxin-Co1a (44 aa).

4 disulfides stabilise this stretch: Cys2–Cys19, Cys9–Cys25, Cys18–Cys39, and Cys27–Cys37.

In terms of tissue distribution, expressed by the venom gland.

The protein resides in the secreted. Omega-agatoxins are antagonists of voltage-gated calcium channels (Cav). Toxic to mice by intracerebroventricular injection. The chain is U4-ctenitoxin-Co1a from Ctenus ornatus (Brazilian spider).